The chain runs to 257 residues: Hydroxyacylglutathione hydrolase (257 aa).

His-54, His-56, Asp-58, His-59, His-113, Asp-137, and His-175 together coordinate Zn(2+).

It belongs to the metallo-beta-lactamase superfamily. Glyoxalase II family. Monomer. Requires Zn(2+) as cofactor.

The catalysed reaction is an S-(2-hydroxyacyl)glutathione + H2O = a 2-hydroxy carboxylate + glutathione + H(+). It functions in the pathway secondary metabolite metabolism; methylglyoxal degradation; (R)-lactate from methylglyoxal: step 2/2. In terms of biological role, thiolesterase that catalyzes the hydrolysis of S-D-lactoyl-glutathione to form glutathione and D-lactic acid. This Acaryochloris marina (strain MBIC 11017) protein is Hydroxyacylglutathione hydrolase.